The following is a 318-amino-acid chain: Glutathione synthetase (318 aa).

In terms of domain architecture, ATP-grasp spans 125-311 (EKLFTAWFPE…ITGKLMDAIE (187 aa)). Residue 151–208 (FRQEHGDIILKPLDGMGGASIFRVKENDPNVSVIIETLTNHGQNYAMAQTFVPDISNG) coordinates ATP. Mg(2+) contacts are provided by E282 and N284.

This sequence belongs to the prokaryotic GSH synthase family. The cofactor is Mg(2+). Mn(2+) serves as cofactor.

The enzyme catalyses gamma-L-glutamyl-L-cysteine + glycine + ATP = glutathione + ADP + phosphate + H(+). It functions in the pathway sulfur metabolism; glutathione biosynthesis; glutathione from L-cysteine and L-glutamate: step 2/2. This chain is Glutathione synthetase, found in Vibrio vulnificus (strain YJ016).